Here is a 193-residue protein sequence, read N- to C-terminus: Ribonuclease HII (193 aa).

The 179-residue stretch at 15 to 193 (CIVAGIDEAG…PYHRRSFRCC (179 aa)) folds into the RNase H type-2 domain. D21, E22, and D112 together coordinate a divalent metal cation.

Belongs to the RNase HII family. Mn(2+) is required as a cofactor. It depends on Mg(2+) as a cofactor.

The protein resides in the cytoplasm. The catalysed reaction is Endonucleolytic cleavage to 5'-phosphomonoester.. Endonuclease that specifically degrades the RNA of RNA-DNA hybrids. The sequence is that of Ribonuclease HII from Rickettsia africae (strain ESF-5).